The primary structure comprises 97 residues: Co-chaperonin GroES (97 aa).

The protein belongs to the GroES chaperonin family. Heptamer of 7 subunits arranged in a ring. Interacts with the chaperonin GroEL.

The protein resides in the cytoplasm. Functionally, together with the chaperonin GroEL, plays an essential role in assisting protein folding. The GroEL-GroES system forms a nano-cage that allows encapsulation of the non-native substrate proteins and provides a physical environment optimized to promote and accelerate protein folding. GroES binds to the apical surface of the GroEL ring, thereby capping the opening of the GroEL channel. This Pseudomonas fluorescens (strain ATCC BAA-477 / NRRL B-23932 / Pf-5) protein is Co-chaperonin GroES.